Consider the following 396-residue polypeptide: Elongation factor Tu (396 aa).

The region spanning 10 to 206 is the tr-type G domain; that stretch reads KPHVNVGTIG…ALDSYIPTPE (197 aa). The segment at 19 to 26 is G1; it reads GHVDHGKT. 19-26 contacts GTP; sequence GHVDHGKT. Position 26 (Thr26) interacts with Mg(2+). The G2 stretch occupies residues 60–64; the sequence is GITIN. Positions 81–84 are G3; the sequence is DCPG. Residues 81 to 85 and 136 to 139 each bind GTP; these read DCPGH and NKCD. Residues 136–139 are G4; that stretch reads NKCD. The segment at 174 to 176 is G5; that stretch reads SAK.

Belongs to the TRAFAC class translation factor GTPase superfamily. Classic translation factor GTPase family. EF-Tu/EF-1A subfamily. In terms of assembly, monomer.

The protein localises to the cytoplasm. The enzyme catalyses GTP + H2O = GDP + phosphate + H(+). GTP hydrolase that promotes the GTP-dependent binding of aminoacyl-tRNA to the A-site of ribosomes during protein biosynthesis. The polypeptide is Elongation factor Tu (Herminiimonas arsenicoxydans).